Consider the following 835-residue polypeptide: Lon protease (835 aa).

One can recognise a Lon N-terminal domain in the interval 36-234 (VHVFPLLRRP…KALILLKKEL (199 aa)). Residue 387–394 (GPPGVGKT) coordinates ATP. In terms of domain architecture, Lon proteolytic spans 646 to 828 (RTPVGVCMGL…DQVFKISFPN (183 aa)). Catalysis depends on residues serine 734 and lysine 777.

The protein belongs to the peptidase S16 family. As to quaternary structure, homohexamer. Organized in a ring with a central cavity.

The protein localises to the cytoplasm. The catalysed reaction is Hydrolysis of proteins in presence of ATP.. In terms of biological role, ATP-dependent serine protease that mediates the selective degradation of mutant and abnormal proteins as well as certain short-lived regulatory proteins. Required for cellular homeostasis and for survival from DNA damage and developmental changes induced by stress. Degrades polypeptides processively to yield small peptide fragments that are 5 to 10 amino acids long. Binds to DNA in a double-stranded, site-specific manner. The sequence is that of Lon protease from Protochlamydia amoebophila (strain UWE25).